The chain runs to 457 residues: Multidrug resistance protein MdtK (457 aa).

12 helical membrane passes run 11–31 (LLAL…MGVV), 46–66 (AVAV…GLLL), 93–113 (WLAF…DHII), 127–147 (AVGF…FQVL), 160–180 (GMVI…IFIY), 188–208 (LGGV…FLMM), 243–263 (LPVA…ALLV), 278–300 (LNFS…IRVG), 316–336 (YTSI…TVVF), 350–370 (VVVM…SDAI), 387–407 (IFFI…YLLG), and 418–438 (PSGF…LMAL).

It belongs to the multi antimicrobial extrusion (MATE) (TC 2.A.66.1) family. MdtK subfamily.

Its subcellular location is the cell inner membrane. Its function is as follows. Multidrug efflux pump that functions probably as a Na(+)/drug antiporter. In Yersinia enterocolitica serotype O:8 / biotype 1B (strain NCTC 13174 / 8081), this protein is Multidrug resistance protein MdtK.